The sequence spans 201 residues: Nascent polypeptide-associated complex subunit alpha (201 aa).

Positions 1–20 are enriched in basic and acidic residues; it reads MANPRVEELPDEEVKKTVVD. Disordered stretches follow at residues 1 to 51 and 118 to 165; these read MANP…SRNE and AQQL…IEDK. Positions 21–36 are enriched in acidic residues; sequence DHDDDSSSDSDGEEET. In terms of domain architecture, NAC-A/B spans 48–113; sequence SRNEKKARKA…AKIEDLNASA (66 aa). The span at 126-149 shows a compositional bias: basic and acidic residues; the sequence is GHDHDHAGHSHGEAKASEGDAKKE. Over residues 150–161 the composition is skewed to acidic residues; it reads EEDDDEEVDADG. Positions 162–200 constitute a UBA domain; it reads IEDKDIELVMTQAGVSRTKAIKALKENDNDIVNSIMALS.

The protein belongs to the NAC-alpha family. As to quaternary structure, part of the nascent polypeptide-associated complex (NAC), consisting of EGD2 and EGD1. NAC associates with ribosomes via EGD1.

Its subcellular location is the cytoplasm. The protein localises to the nucleus. In terms of biological role, component of the nascent polypeptide-associated complex (NAC), a dynamic component of the ribosomal exit tunnel, protecting the emerging polypeptides from interaction with other cytoplasmic proteins to ensure appropriate nascent protein targeting. The NAC complex also promotes mitochondrial protein import by enhancing productive ribosome interactions with the outer mitochondrial membrane and blocks the inappropriate interaction of ribosomes translating non-secretory nascent polypeptides with translocation sites in the membrane of the endoplasmic reticulum. EGD2 may also be involved in transcription regulation. The protein is Nascent polypeptide-associated complex subunit alpha (EGD2) of Pyricularia oryzae (strain 70-15 / ATCC MYA-4617 / FGSC 8958) (Rice blast fungus).